Here is an 829-residue protein sequence, read N- to C-terminus: Probable methyltransferase PMT26 (829 aa).

Over 1–17 (MAQPRYTRIDNRRPSSN) the chain is Cytoplasmic. The helical; Signal-anchor for type II membrane protein transmembrane segment at 18 to 38 (YCSTVTVVVFVALCLVGIWMM) threads the bilayer. The Lumenal portion of the chain corresponds to 39–829 (TSSSVGPAQN…EVETLTYAIG (791 aa)). The interval 55–258 (DNKDGIKKQM…TSGDLSPPGA (204 aa)) is disordered. Composition is skewed to basic and acidic residues over residues 85 to 143 (NEDK…DSKS), 151 to 160 (LDEKKDLKDN), 168 to 177 (TNEKQTKPET), and 187 to 231 (ENQK…KENT). 4 N-linked (GlcNAc...) asparagine glycosylation sites follow: asparagine 215, asparagine 247, asparagine 264, and asparagine 270. Polar residues predominate over residues 241-252 (QEGQSKNETSGD). The segment at 271–291 (GSFSTQATESKNEKEAQKGSG) is disordered. Residues 280-291 (SKNEKEAQKGSG) show a composition bias toward basic and acidic residues. N-linked (GlcNAc...) asparagine glycosylation is found at asparagine 302, asparagine 579, asparagine 595, and asparagine 756.

It belongs to the methyltransferase superfamily.

It is found in the golgi apparatus membrane. This is Probable methyltransferase PMT26 from Arabidopsis thaliana (Mouse-ear cress).